We begin with the raw amino-acid sequence, 326 residues long: MYGIEYTTILIFLTSITLLNYILKSITRMMDYIIYRFLLIVVILATIINAQNYGVNLPITGSMDTAYADSTQSEPFLTSTLCLYYPVEASNEIADTEWKDTLSQLFLTKGWPTGSVYLKEYADIAAFSVEPQLYCDYNLVLMKYDSTQELDMSELADLILNEWLCNPMDITLYYYQQTDEANKWISTGSSCTVKVCPLNTQTLGIGCLITNPDTFETVATMEKLVITDVVDGVNHKLNVTTATCTIRNCKKLGPRENVAVIQVGGANVLDITADPTTTPQTERMMRINWKKWWQVFYTVVDYVNQIIQTMSKRSRSLNSSAFYYRV.

The first 50 residues, 1-50 (MYGIEYTTILIFLTSITLLNYILKSITRMMDYIIYRFLLIVVILATIINA), serve as a signal peptide directing secretion. Disulfide bonds link cysteine 82–cysteine 135, cysteine 165–cysteine 249, cysteine 191–cysteine 244, and cysteine 196–cysteine 207. A Ca(2+)-binding site is contributed by aspartate 95. The tract at residues 165–167 (CNP) is CNP motif; interaction with ITGAV/ITGB3. Residues glutamine 177, glycine 206, threonine 214, glutamate 216, aspartate 228, valine 229, and aspartate 231 each contribute to the Ca(2+) site. Asparagine 238 is a glycosylation site (N-linked (GlcNAc...) asparagine; by host). The interval 253–255 (GPR) is GPR motif; interaction with ITGAX/ITGB2. Aspartate 301 lines the Ca(2+) pocket. Asparagine 318 carries N-linked (GlcNAc...) asparagine; by host glycosylation.

This sequence belongs to the rotavirus VP7 family. Homotrimer; disulfide-linked. 2 Ca(2+) ions bound at each subunit interface in the trimer hold the trimer together. Interacts with the intermediate capsid protein VP6. Interacts with the outer capsid protein VP5*. In terms of processing, N-glycosylated. The N-terminus is blocked possibly by pyroglutamic acid.

The protein localises to the virion. It localises to the host endoplasmic reticulum lumen. Functionally, calcium-binding protein that interacts with rotavirus cell receptors once the initial attachment by VP4 has been achieved. Rotavirus attachment and entry into the host cell probably involves multiple sequential contacts between the outer capsid proteins VP4 and VP7, and the cell receptors. Following entry into the host cell, low intracellular or intravesicular Ca(2+) concentration probably causes the calcium-stabilized VP7 trimers to dissociate from the virion. This step is probably necessary for the membrane-disrupting entry step and the release of VP4, which is locked onto the virion by VP7. The polypeptide is Outer capsid glycoprotein VP7 (Bos taurus (Bovine)).